A 1019-amino-acid chain; its full sequence is Alpha-mannosidase At3g26720 (1019 aa).

An N-terminal signal peptide occupies residues 1-22; the sequence is MAVKCFSLYLILAAIVIGGVTS. Zn(2+) is bound by residues H47 and D49. The N-linked (GlcNAc...) asparagine glycan is linked to N64. D169 contacts Zn(2+). Residues N278 and N336 are each glycosylated (N-linked (GlcNAc...) asparagine). Residue H410 participates in Zn(2+) binding. C466 and C474 are joined by a disulfide. N470, N638, N730, and N820 each carry an N-linked (GlcNAc...) asparagine glycan. Cysteines 824 and 829 form a disulfide.

It belongs to the glycosyl hydrolase 38 family. Homodimer. Requires Zn(2+) as cofactor.

The enzyme catalyses Hydrolysis of terminal, non-reducing alpha-D-mannose residues in alpha-D-mannosides.. Its function is as follows. Liberates mannose from p-nitrophenyl-alpha-D-mannoside in vitro. The chain is Alpha-mannosidase At3g26720 from Arabidopsis thaliana (Mouse-ear cress).